Reading from the N-terminus, the 219-residue chain is ATP phosphoribosyltransferase (219 aa).

The protein belongs to the ATP phosphoribosyltransferase family. Short subfamily. As to quaternary structure, heteromultimer composed of HisG and HisZ subunits.

Its subcellular location is the cytoplasm. It carries out the reaction 1-(5-phospho-beta-D-ribosyl)-ATP + diphosphate = 5-phospho-alpha-D-ribose 1-diphosphate + ATP. The protein operates within amino-acid biosynthesis; L-histidine biosynthesis; L-histidine from 5-phospho-alpha-D-ribose 1-diphosphate: step 1/9. In terms of biological role, catalyzes the condensation of ATP and 5-phosphoribose 1-diphosphate to form N'-(5'-phosphoribosyl)-ATP (PR-ATP). Has a crucial role in the pathway because the rate of histidine biosynthesis seems to be controlled primarily by regulation of HisG enzymatic activity. In Clostridium kluyveri (strain NBRC 12016), this protein is ATP phosphoribosyltransferase.